Here is a 278-residue protein sequence, read N- to C-terminus: Myb/SANT-like DNA-binding domain-containing protein 1 (278 aa).

The region spanning 44–131 (RNWTDAEMRG…WPYYLAIDRI (88 aa)) is the Myb-like domain. Residues 139–167 (CEGKLPDGQQPGPSTSQTEASLSPSAKST) form a disordered region. The segment covering 149-166 (PGPSTSQTEASLSPSAKS) has biased composition (polar residues).

The polypeptide is Myb/SANT-like DNA-binding domain-containing protein 1 (Msantd1) (Mus musculus (Mouse)).